We begin with the raw amino-acid sequence, 699 residues long: Chitin synthase 7 (699 aa).

A run of 6 helical transmembrane segments spans residues 19–39, 58–80, 98–118, 445–465, 474–494, and 507–527; these read IVGVVMLAAVLEWFLWIAAFL, SVVVALLFTALRSIFLPIMVVTL, LQWFGFWCFAGLLTVPWLFCI, FMQNTIRTTALLFFIMVLAII, LPVGFIAVSLGLNWLLMIYFG, and VMFVVNPFFNWFYMVYGIFTA. Residues 628 to 648 form a disordered region; that stretch reads AAGGSGEASEPGTRWAPDPRE.

It belongs to the chitin synthase family. Class VI subfamily.

It localises to the cell membrane. It carries out the reaction [(1-&gt;4)-N-acetyl-beta-D-glucosaminyl](n) + UDP-N-acetyl-alpha-D-glucosamine = [(1-&gt;4)-N-acetyl-beta-D-glucosaminyl](n+1) + UDP + H(+). In terms of biological role, polymerizes chitin, a structural polymer of the cell wall and septum, by transferring the sugar moiety of UDP-GlcNAc to the non-reducing end of the growing chitin polymer. Plays a role in cell wall integrity. Required to successfully penetrate the host plants and thus plays a key role in pathogenicity. This chain is Chitin synthase 7, found in Verticillium dahliae (strain VdLs.17 / ATCC MYA-4575 / FGSC 10137) (Verticillium wilt).